The sequence spans 266 residues: Large ribosomal subunit protein eL8 (266 aa).

Residues lysine 11, lysine 20, and lysine 21 each participate in a glycyl lysine isopeptide (Lys-Gly) (interchain with G-Cter in SUMO2) cross-link. Lysine 34 carries the post-translational modification N6-acetyllysine. Lysine 48 is covalently cross-linked (Glycyl lysine isopeptide (Lys-Gly) (interchain with G-Cter in SUMO2)). An N6-acetyllysine; alternate modification is found at lysine 97. Lysine 97 is covalently cross-linked (Glycyl lysine isopeptide (Lys-Gly) (interchain with G-Cter in SUMO2); alternate). Lysine 125 is covalently cross-linked (Glycyl lysine isopeptide (Lys-Gly) (interchain with G-Cter in SUMO2)). The residue at position 217 (lysine 217) is an N6-acetyllysine. A Glycyl lysine isopeptide (Lys-Gly) (interchain with G-Cter in SUMO2) cross-link involves residue lysine 245.

This sequence belongs to the eukaryotic ribosomal protein eL8 family. As to quaternary structure, component of the large ribosomal subunit. Interacts with CRY1. Interacts with DICER1, AGO2, TARBP2, MOV10 and EIF6; they form a large RNA-induced silencing complex (RISC).

The protein resides in the cytoplasm. In terms of biological role, component of the large ribosomal subunit. The ribosome is a large ribonucleoprotein complex responsible for the synthesis of proteins in the cell. The chain is Large ribosomal subunit protein eL8 (Rpl7a) from Rattus norvegicus (Rat).